The following is a 130-amino-acid chain: uncharacterized protein (130 aa).

An N-terminal signal peptide occupies residues Met-1–Ala-20.

This is an uncharacterized protein from Saccharomyces cerevisiae (strain ATCC 204508 / S288c) (Baker's yeast).